The following is a 344-amino-acid chain: Phenylalanine--tRNA ligase alpha subunit (344 aa).

Position 256 (Glu256) interacts with Mg(2+).

Belongs to the class-II aminoacyl-tRNA synthetase family. Phe-tRNA synthetase alpha subunit type 1 subfamily. Tetramer of two alpha and two beta subunits. Mg(2+) serves as cofactor.

It is found in the cytoplasm. It catalyses the reaction tRNA(Phe) + L-phenylalanine + ATP = L-phenylalanyl-tRNA(Phe) + AMP + diphosphate + H(+). The sequence is that of Phenylalanine--tRNA ligase alpha subunit (pheS) from Bacillus subtilis (strain 168).